We begin with the raw amino-acid sequence, 723 residues long: Aminodeoxychorismate synthase (723 aa).

Residues 2–195 (RTLLVDNYDS…RDLTERHGRT (194 aa)) enclose the Glutamine amidotransferase type-1 domain. Cysteine 82 serves as the catalytic Nucleophile. The tract at residues 96 to 117 (VGRAPEPRHGRTSAVRHDGTGL) is disordered. Residues 98-114 (RAPEPRHGRTSAVRHDG) show a composition bias toward basic and acidic residues. Catalysis depends on residues histidine 169 and glutamate 171. Disordered regions lie at residues 192–219 (HGRTRHGGRAGHGTLPPPAPARETKATT) and 693–723 (FPGRERPGKDLDGEPDDGTDAGAPKDLVLPG). Residues 255–723 (LDSSRPGGEL…GAPKDLVLPG (469 aa)) are PABB component. Residues 695–704 (GRERPGKDLD) show a composition bias toward basic and acidic residues.

It in the C-terminal section; belongs to the anthranilate synthase component I family.

The enzyme catalyses chorismate + L-glutamine = 4-amino-4-deoxychorismate + L-glutamate. Its pathway is antibiotic biosynthesis; candicidin biosynthesis. Involved in candicidin biosynthesis. Catalyzes the biosynthesis of 4-amino-4-deoxychorismate (ADC) from chorismate and glutamine. In Streptomyces griseus, this protein is Aminodeoxychorismate synthase.